Reading from the N-terminus, the 130-residue chain is Small ribosomal subunit protein uS9 (130 aa).

It belongs to the universal ribosomal protein uS9 family.

In Cupriavidus taiwanensis (strain DSM 17343 / BCRC 17206 / CCUG 44338 / CIP 107171 / LMG 19424 / R1) (Ralstonia taiwanensis (strain LMG 19424)), this protein is Small ribosomal subunit protein uS9.